An 817-amino-acid polypeptide reads, in one-letter code: Neurabin-2 (817 aa).

2 actin-binding regions span residues methionine 1–serine 154 and glutamate 164–valine 283. The disordered stretch occupies residues methionine 1–alanine 165. Residues serine 15 and serine 17 each carry the phosphoserine modification. Positions glycine 44–lysine 58 are enriched in basic residues. Serine 94, serine 100, and serine 116 each carry phosphoserine. An interaction with D(2) dopamine receptor region spans residues serine 100–alanine 371. The segment covering serine 131–proline 141 has biased composition (pro residues). An interaction with ADRA2A, ADRA2B and ADRA2C region spans residues arginine 169 to proline 255. Residue serine 192 is modified to Phosphoserine. Residue threonine 193 is modified to Phosphothreonine. Serine 205 is subject to Phosphoserine. Threonine 207 is modified (phosphothreonine). A disordered region spans residues glutamate 216–arginine 447. Positions glutamine 252–proline 261 are enriched in pro residues. The segment covering lysine 291 to glutamate 302 has biased composition (basic and acidic residues). The segment covering serine 333–alanine 342 has biased composition (low complexity). A compositionally biased stretch (basic and acidic residues) spans glutamate 344–alanine 356. Acidic residues predominate over residues leucine 410–tyrosine 425. The interval aspartate 417–leucine 494 is interaction with protein phosphatase 1. Serine 438 bears the Phosphoserine mark. The PP1-binding motif signature appears at arginine 447–phenylalanine 451. The segment at serine 480 to glycine 525 is interaction with RGS2. Residues proline 496–arginine 584 form the PDZ domain. The tract at residues isoleucine 595–serine 816 is interaction with TGN38. The residue at position 658 (serine 658) is a Phosphoserine. The stretch at phenylalanine 671–leucine 788 forms a coiled coil.

In terms of assembly, interacts with DCLK2. Possibly exists as a homodimer, homotrimer or a homotetramer. Interacts with F-actin, PPP1CA, neurabin-1, TGN38 and D(2) dopamine receptor. Interacts with RGS1, RGS2, RGS4, RGS19 and ADRA1B, ADRA2A, ADRA2B, ADRA2C, CDKN2A, PPP1R2, RASGFR1 and TIAM1. Interacts (via C-terminus) with SPATA13 (via C-terminal tail). Interacts with ADRA2B. Stimulation of D1 (but not D2) dopamine receptors induces Ser-94 phosphorylation. Dephosphorylation of Ser-94 is mediated mainly by PP1 and to a lesser extent by PP2A. Phosphorylation of spinophilin disrupts its association with F-actin, but does not affect its binding to PP1.

Its subcellular location is the cytoplasm. The protein resides in the cytoskeleton. It localises to the nucleus. The protein localises to the cell projection. It is found in the dendritic spine. Its subcellular location is the postsynaptic density. The protein resides in the synapse. It localises to the cell junction. The protein localises to the adherens junction. It is found in the cell membrane. Its subcellular location is the lamellipodium. The protein resides in the filopodium. It localises to the ruffle membrane. Seems to act as a scaffold protein in multiple signaling pathways. Modulates excitatory synaptic transmission and dendritic spine morphology. Binds to actin filaments (F-actin) and shows cross-linking activity. Binds along the sides of the F-actin. May play an important role in linking the actin cytoskeleton to the plasma membrane at the synaptic junction. Believed to target protein phosphatase 1/PP1 to dendritic spines, which are rich in F-actin, and regulates its specificity toward ion channels and other substrates, such as AMPA-type and NMDA-type glutamate receptors. Plays a role in regulation of G-protein coupled receptor signaling, including dopamine D2 receptors and alpha-adrenergic receptors. May establish a signaling complex for dopaminergic neurotransmission through D2 receptors by linking receptors downstream signaling molecules and the actin cytoskeleton. Binds to ADRA1B and RGS2 and mediates regulation of ADRA1B signaling. May confer to Rac signaling specificity by binding to both, RacGEFs and Rac effector proteins. Probably regulates p70 S6 kinase activity by forming a complex with TIAM1. Required for hepatocyte growth factor (HGF)-induced cell migration. The chain is Neurabin-2 (PPP1R9B) from Homo sapiens (Human).